The primary structure comprises 2602 residues: Filamin-B (2602 aa).

The segment at 1–239 (MPVTEKDLAE…VMTYLSQFPK (239 aa)) is actin-binding. Calponin-homology (CH) domains follow at residues 16–122 (KIQQ…LHYS) and 139–242 (QTPK…KAKL). Thr216 carries the post-translational modification Phosphothreonine. The interval 244 to 267 (PGAPLKPKLNPKKARAYGRGIEPT) is disordered. Filamin repeat units lie at residues 249–347 (KPKL…EVSV), 349–446 (KAQG…VVQV), 447–543 (GEAC…EVQV), 544–636 (GPEA…MAFI), 640–736 (TGGY…RVNI), 737–839 (GQGS…RVKV), 840–938 (DPSH…TVGV), 939–1034 (AAPL…TVEA), 1035–1127 (SLPP…KADI), 1128–1222 (EMPF…RVKV), 1223–1322 (EPAV…KVAV), 1323–1415 (TEGC…RVPV), 1416–1511 (KDVV…KVKV), 1512–1608 (LPTY…RIRA), and 1609–1704 (TQTG…TVMA). The residue at position 519 (Thr519) is a Phosphothreonine. Residue Lys681 is modified to N6-acetyllysine. Ser730 carries the phosphoserine modification. Phosphoserine is present on residues Ser886, Ser932, Ser983, and Ser1028. The segment at 1128–1511 (EMPFDPSKVV…IPRSPFKVKV (384 aa)) is interaction with FBLP1. Thr1307 carries the phosphothreonine modification. A Phosphoserine modification is found at Ser1316. Residues Ser1433, Asn1474, Ser1505, and Ser1602 each carry the phosphoserine modification. The segment at 1705–1728 (TDGEVTAVEEAPVNACPPGFRPWV) is hinge 1. 8 Filamin repeats span residues 1729–1813 (TEEA…SPLQ), 1816–1908 (VNYP…TAKI), 1919–1994 (KLGS…SIMV), 1997–2089 (SEIG…TVKI), 2091–2185 (GEGR…QFTV), 2188–2280 (LGEG…LVPV), 2282–2375 (APSD…KVRV), and 2379–2471 (GQAG…KAKV). Lys1780 is subject to N6-acetyllysine. Positions 1862–2148 (SKAEISCIDN…RVTEAEIVPM (287 aa)) are interaction with the cytoplasmic tail of GP1BA. Positions 2060–2225 (SYFPTVPGVY…IWTREAGAGG (166 aa)) are interaction with FLNA 1. 3 positions are modified to phosphoserine: Ser2083, Ser2107, and Ser2113. The interval 2130 to 2602 (SAHVTSPSGR…PGSPFHVTVP (473 aa)) is interaction with INPPL1. Residues Ser2369 and Ser2465 each carry the phosphoserine modification. Lys2468 participates in a covalent cross-link: Glycyl lysine isopeptide (Lys-Gly) (interchain with G-Cter in ISG15). The interval 2472–2506 (TGQRLVSPGSANETSSILVESVTRSSTETCYSAIP) is hinge 2. The tract at residues 2472–2602 (TGQRLVSPGS…PGSPFHVTVP (131 aa)) is self-association site, tail. Residues Ser2478, Ser2481, and Ser2492 each carry the phosphoserine modification. The Filamin 24 repeat unit spans residues 2507-2601 (KASSDASKVT…IPGSPFHVTV (95 aa)). Residues 2507–2602 (KASSDASKVT…PGSPFHVTVP (96 aa)) form an interaction with FLNA 2 region. 2 positions are modified to N6-succinyllysine: Lys2518 and Lys2524. N6-acetyllysine is present on Lys2576.

It belongs to the filamin family. In terms of assembly, homodimer. Interacts with MICALL2. Interacts with RFLNA and RFLNB. Isoform 1 interacts with FBLP1, FLNA, FLNC, GP1BA, INPPL1, ITGB1A, PSEN1 and PSEN2. Isoform 3 interacts with ITGB1A, ITGB1D, ITGB3 and ITGB6. Interacts with MYOT and MYOZ1. Interacts with HBV capsid protein. Interacts with ASB2 isoform 1; the interaction targets FLNB for proteasomal degradation. In terms of processing, ISGylation prevents ability to interact with the upstream activators of the JNK cascade and inhibits IFNA-induced JNK signaling. Ubiquitination by a SCF-like complex containing ASB2 isoform 1 leads to proteasomal degradation which promotes muscle differentiation. Ubiquitous. Isoform 1 and isoform 2 are expressed in placenta, bone marrow, brain, umbilical vein endothelial cells (HUVEC), retina and skeletal muscle. Isoform 1 is predominantly expressed in prostate, uterus, liver, thyroid, stomach, lymph node, small intestine, spleen, skeletal muscle, kidney, placenta, pancreas, heart, lung, platelets, endothelial cells, megakaryocytic and erythroleukemic cell lines. Isoform 2 is predominantly expressed in spinal cord, platelet and Daudi cells. Also expressed in thyroid adenoma, neurofibrillary tangles (NFT), senile plaques in the hippocampus and cerebral cortex in Alzheimer disease (AD). Isoform 3 and isoform 6 are expressed predominantly in lung, heart, skeletal muscle, testis, spleen, thymus and leukocytes. Isoform 4 and isoform 5 are expressed in heart.

It is found in the cytoplasm. It localises to the cell cortex. The protein localises to the cytoskeleton. Its subcellular location is the stress fiber. The protein resides in the myofibril. It is found in the sarcomere. It localises to the z line. In terms of biological role, connects cell membrane constituents to the actin cytoskeleton. May promote orthogonal branching of actin filaments and links actin filaments to membrane glycoproteins. Anchors various transmembrane proteins to the actin cytoskeleton. Interaction with FLNA may allow neuroblast migration from the ventricular zone into the cortical plate. Various interactions and localizations of isoforms affect myotube morphology and myogenesis. Isoform 6 accelerates muscle differentiation in vitro. This Homo sapiens (Human) protein is Filamin-B (FLNB).